Reading from the N-terminus, the 386-residue chain is Phosphoglycerate kinase (386 aa).

Substrate-binding positions include 21–23, Arg-36, 59–62, Arg-113, and Arg-146; these read DLN and HLGR. Residues Lys-197, Glu-314, and 340–343 each bind ATP; that span reads GGDT.

The protein belongs to the phosphoglycerate kinase family. As to quaternary structure, monomer.

The protein localises to the cytoplasm. It catalyses the reaction (2R)-3-phosphoglycerate + ATP = (2R)-3-phospho-glyceroyl phosphate + ADP. It functions in the pathway carbohydrate degradation; glycolysis; pyruvate from D-glyceraldehyde 3-phosphate: step 2/5. The sequence is that of Phosphoglycerate kinase from Azotobacter vinelandii (strain DJ / ATCC BAA-1303).